The chain runs to 444 residues: Phosphoglucosamine mutase (444 aa).

The active-site Phosphoserine intermediate is the serine 102. Residues serine 102, aspartate 241, aspartate 243, and aspartate 245 each coordinate Mg(2+). Serine 102 is modified (phosphoserine).

It belongs to the phosphohexose mutase family. Requires Mg(2+) as cofactor. Post-translationally, activated by phosphorylation.

The catalysed reaction is alpha-D-glucosamine 1-phosphate = D-glucosamine 6-phosphate. Catalyzes the conversion of glucosamine-6-phosphate to glucosamine-1-phosphate. The protein is Phosphoglucosamine mutase of Paracidovorax citrulli (strain AAC00-1) (Acidovorax citrulli).